We begin with the raw amino-acid sequence, 468 residues long: Alcohol dehydrogenase (quinone), cytochrome c subunit (468 aa).

Positions 1–23 (MINRLKVTFSAAAFSLLAGTALA) are cleaved as a signal peptide. Cytochrome c domains lie at 31–134 (ALVQ…MHGV), 178–293 (PEIA…KSLP), and 317–407 (TASV…RTSW). Cys45, Cys48, His49, Cys193, Cys196, His197, Cys330, Cys333, and His334 together coordinate heme c.

The alcohol dehydrogenase multicomponent enzyme system is composed of a dehydrogenase subunit I (AdhA) and a cytochrome c subunit II (AdhB). It depends on heme c as a cofactor.

It is found in the cell membrane. The enzyme catalyses ethanol + a ubiquinone = a ubiquinol + acetaldehyde. In terms of biological role, cytochrome c component of the alcohol dehydrogenase multicomponent enzyme system which is involved in the production of acetic acid and in the ethanol oxidase respiratory chain. Quinohemoprotein alcohol dehydrogenase (ADH) catalyzes the oxidation of ethanol to acetaldehyde by transferring electrons to the ubiquinone embedded in the membrane phospholipids. The electrons transfer from ethanol to membranous ubiquinone occurs from pyrroloquinoline quinone (PQQ) to one heme c in subunit I (AdhA), and finally to two heme c in subunit II (AdhB). Besides ubiquinone reduction, ADH also has a ubiquinol (QH2) oxidation reaction which mediates electron transfer from ubiquinol to the non-energy generating bypass oxidase system. The electrons transfer occurs from ubiquinol (QH2) to the additional heme c within subunit II (AdhB). The polypeptide is Alcohol dehydrogenase (quinone), cytochrome c subunit (Gluconacetobacter polyoxogenes (Acetobacter polyoxogenes)).